Consider the following 218-residue polypeptide: Fucoxanthin-chlorophyll a-c binding protein, chloroplastic (218 aa).

The transit peptide at 1-36 (MFYSAAVAALMVGSASAFLAPAQFNSVAKSSGALSM) directs the protein to the chloroplast.

Belongs to the fucoxanthin chlorophyll protein family. As to quaternary structure, the LHC complex of chromophytic algae is composed of fucoxanthin, chlorophyll A and C bound non-covalently by fucoxanthin chlorophyll proteins (FCPs). The ratio of pigments in this LHC is; fucoxanthin: chlorophyll C: chlorophyll A; (0.6-1): (0.1-0.3): (1).

It is found in the plastid. The protein localises to the chloroplast thylakoid membrane. Its function is as follows. The light-harvesting complex (LHC) functions as a light receptor, it captures and delivers excitation energy to photosystems with which it is closely associated. Energy is transferred from the carotenoid and chlorophyll C (or B) to chlorophyll A and the photosynthetic reaction centers where it is used to synthesize ATP and reducing power. The sequence is that of Fucoxanthin-chlorophyll a-c binding protein, chloroplastic from Chattonella marina var. antiqua (Red tide flagellate).